The chain runs to 127 residues: Phosphoribosyl-AMP cyclohydrolase (127 aa).

Asp-78 is a binding site for Mg(2+). Position 79 (Cys-79) interacts with Zn(2+). Residues Asp-80 and Asp-82 each contribute to the Mg(2+) site. The Zn(2+) site is built by Cys-95 and Cys-102.

It belongs to the PRA-CH family. As to quaternary structure, homodimer. The cofactor is Mg(2+). Zn(2+) serves as cofactor.

The protein localises to the cytoplasm. The catalysed reaction is 1-(5-phospho-beta-D-ribosyl)-5'-AMP + H2O = 1-(5-phospho-beta-D-ribosyl)-5-[(5-phospho-beta-D-ribosylamino)methylideneamino]imidazole-4-carboxamide. It participates in amino-acid biosynthesis; L-histidine biosynthesis; L-histidine from 5-phospho-alpha-D-ribose 1-diphosphate: step 3/9. Functionally, catalyzes the hydrolysis of the adenine ring of phosphoribosyl-AMP. The protein is Phosphoribosyl-AMP cyclohydrolase of Salinibacter ruber (strain DSM 13855 / M31).